Reading from the N-terminus, the 1791-residue chain is Brefeldin A-inhibited guanine nucleotide-exchange protein 2 (1791 aa).

Met1 carries the post-translational modification N-acetylmethionine. Residues 2-224 form a DCB; DCB:DCB domain and DCB:HUS domain interaction region; that stretch reads QESQTKSMFV…KPQSPVIQAT (223 aa). Disordered stretches follow at residues 208–292 and 311–350; these read LEKP…DNGA and AAEKQGLPEPDQAPGVPECQECTVPPAVDENSQTNGIADD. Residues Ser214, Ser218, and Ser227 each carry the phosphoserine modification. Residues 214 to 225 are compositionally biased toward polar residues; it reads SKPQSPVIQATA. The segment covering 233–243 has biased composition (polar residues); the sequence is LKQSQAQSKPT. The residue at position 244 (Thr244) is a Phosphothreonine. The segment covering 244–257 has biased composition (basic and acidic residues); that stretch reads TPEKTELPNGDHAR. Ser277 carries the post-translational modification Phosphoserine. 2 positions are modified to phosphoserine: Ser355 and Ser356. The segment at 515–535 is HUS; DCB:HUS domain interaction; sequence ADAQCVVDIYVNYDCDLNAAN. A Phosphoserine modification is found at Ser621. Residue Thr623 is modified to Phosphothreonine. Ser624 carries the post-translational modification Phosphoserine. Residue Thr633 is modified to Phosphothreonine. The region spanning 661–792 is the SEC7 domain; it reads FNKKPKRGIQ…IIMLTTDLHS (132 aa). Phosphoserine is present on residues Ser707, Ser1518, Ser1520, Ser1521, Ser1532, Ser1535, Ser1541, and Ser1788.

Homodimer. Interacts with ARFGEF1/BIG1; both proteins are probably part of the same or very similar macromolecular complexes. Interacts with PRKAR1A, PRKAR2A, PRKAR1B, PRKAR2B, PPP1CC, PDE3A, TNFRSF1A, MYCBP and EXOC7. Interacts with GABRB1, GABRB2 and GABRB3. Post-translationally, in vitro phosphorylated by PKA reducing its GEF activity and dephosphorylated by phosphatase PP1. Expressed in brain (at protein level).

The protein resides in the cytoplasm. The protein localises to the membrane. It is found in the golgi apparatus. It localises to the perinuclear region. Its subcellular location is the trans-Golgi network. The protein resides in the endosome. The protein localises to the cytoskeleton. It is found in the microtubule organizing center. It localises to the centrosome. Its subcellular location is the cell projection. The protein resides in the dendrite. The protein localises to the cytoplasmic vesicle. It is found in the synapse. Inhibited by brefeldin A. Promotes guanine-nucleotide exchange on ARF1 and ARF3 and to a lower extent on ARF5 and ARF6. Promotes the activation of ARF1/ARF5/ARF6 through replacement of GDP with GTP. Involved in the regulation of Golgi vesicular transport. Required for the integrity of the endosomal compartment. Involved in trafficking from the trans-Golgi network (TGN) to endosomes and is required for membrane association of the AP-1 complex and GGA1. Seems to be involved in recycling of the transferrin receptor from recycling endosomes to the plasma membrane. Probably is involved in the exit of GABA(A) receptors from the endoplasmic reticulum. Involved in constitutive release of tumor necrosis factor receptor 1 via exosome-like vesicles; the function seems to involve PKA and specifically PRKAR2B. Proposed to act as A kinase-anchoring protein (AKAP) and may mediate crosstalk between Arf and PKA pathways. This Rattus norvegicus (Rat) protein is Brefeldin A-inhibited guanine nucleotide-exchange protein 2 (Arfgef2).